A 300-amino-acid chain; its full sequence is Small ribosomal subunit protein uS2 (300 aa).

A disordered region spans residues 269–300 (WEADGADWAASSAAAPAESWAAEAQGAEGAKW).

Belongs to the universal ribosomal protein uS2 family. Component of the small ribosomal subunit. Mature ribosomes consist of a small (40S) and a large (60S) subunit. The 40S subunit contains about 33 different proteins and 1 molecule of RNA (18S). The 60S subunit contains about 49 different proteins and 3 molecules of RNA (25S, 5.8S and 5S). Interacts with rps21.

It is found in the cytoplasm. Required for the assembly and/or stability of the 40S ribosomal subunit. Required for the processing of the 20S rRNA-precursor to mature 18S rRNA in a late step of the maturation of 40S ribosomal subunits. The protein is Small ribosomal subunit protein uS2 (rps0) of Aspergillus terreus (strain NIH 2624 / FGSC A1156).